The sequence spans 73 residues: Putative membrane protein insertion efficiency factor (73 aa).

It belongs to the UPF0161 family.

The protein localises to the cell inner membrane. Functionally, could be involved in insertion of integral membrane proteins into the membrane. The protein is Putative membrane protein insertion efficiency factor of Jannaschia sp. (strain CCS1).